Reading from the N-terminus, the 523-residue chain is Bifunctional purine biosynthesis protein PurH (523 aa).

Positions 4-152 (DHIRRPIRRA…KNHPSVAVVT (149 aa)) constitute an MGS-like domain.

It belongs to the PurH family.

The catalysed reaction is (6R)-10-formyltetrahydrofolate + 5-amino-1-(5-phospho-beta-D-ribosyl)imidazole-4-carboxamide = 5-formamido-1-(5-phospho-D-ribosyl)imidazole-4-carboxamide + (6S)-5,6,7,8-tetrahydrofolate. The enzyme catalyses IMP + H2O = 5-formamido-1-(5-phospho-D-ribosyl)imidazole-4-carboxamide. It functions in the pathway purine metabolism; IMP biosynthesis via de novo pathway; 5-formamido-1-(5-phospho-D-ribosyl)imidazole-4-carboxamide from 5-amino-1-(5-phospho-D-ribosyl)imidazole-4-carboxamide (10-formyl THF route): step 1/1. It participates in purine metabolism; IMP biosynthesis via de novo pathway; IMP from 5-formamido-1-(5-phospho-D-ribosyl)imidazole-4-carboxamide: step 1/1. This chain is Bifunctional purine biosynthesis protein PurH, found in Mycobacterium marinum (strain ATCC BAA-535 / M).